The chain runs to 114 residues: Vesicle-associated membrane protein 2 (114 aa).

Residues 1–11 show a composition bias toward pro residues; that stretch reads MSAPAAGPPAA. The disordered stretch occupies residues 1–31; sequence MSAPAAGPPAAAPGDGAPQGPPNLTSNRRLQ. Ser2 carries the post-translational modification N-acetylserine. The Cytoplasmic segment spans residues 2–92; it reads SAPAAGPPAA…KRKYWWKNMK (91 aa). The v-SNARE coiled-coil homology domain occupies 29-89; sequence RLQQTQAQVD…AKLKRKYWWK (61 aa). A helical; Anchor for type IV membrane protein transmembrane segment spans residues 93–111; it reads MMIIMGVICAIILIIIIVY. Topologically, residues 112-114 are vesicular; sequence FST.

This sequence belongs to the synaptobrevin family.

The protein resides in the cytoplasmic vesicle. Its subcellular location is the secretory vesicle. It localises to the synaptic vesicle membrane. It is found in the cell membrane. Functionally, involved in the targeting and/or fusion of transport vesicles to their target membrane. Major SNARE protein of synaptic vesicles which mediates fusion of synaptic vesicles to release neurotransmitters. Essential for fast vesicular exocytosis and activity-dependent neurotransmitter release as well as fast endocytosis that mediates rapid reuse of synaptic vesicles. The sequence is that of Vesicle-associated membrane protein 2 (vamp2) from Xenopus laevis (African clawed frog).